The chain runs to 432 residues: D-amino acid dehydrogenase (432 aa).

3–17 (VVVLGSGVVGVTSAW) is an FAD binding site.

This sequence belongs to the DadA oxidoreductase family. FAD is required as a cofactor.

It catalyses the reaction a D-alpha-amino acid + A + H2O = a 2-oxocarboxylate + AH2 + NH4(+). It functions in the pathway amino-acid degradation; D-alanine degradation; NH(3) and pyruvate from D-alanine: step 1/1. In terms of biological role, oxidative deamination of D-amino acids. This is D-amino acid dehydrogenase from Enterobacter sp. (strain 638).